The following is a 516-amino-acid chain: UDP-N-acetylmuramyl-tripeptide synthetase (516 aa).

Ser-36 is a UDP-N-acetyl-alpha-D-muramoyl-L-alanyl-D-glutamate binding site. 113–119 (GTKGKTT) is a binding site for ATP. UDP-N-acetyl-alpha-D-muramoyl-L-alanyl-D-glutamate contacts are provided by residues 159–160 (TT), Ser-186, and Arg-194. Lys-228 is modified (N6-carboxylysine).

It belongs to the MurCDEF family. MurE subfamily. Post-translationally, carboxylation is probably crucial for Mg(2+) binding and, consequently, for the gamma-phosphate positioning of ATP.

The protein resides in the cytoplasm. It functions in the pathway cell wall biogenesis; peptidoglycan biosynthesis. Catalyzes the addition of an amino acid to the nucleotide precursor UDP-N-acetylmuramoyl-L-alanyl-D-glutamate (UMAG) in the biosynthesis of bacterial cell-wall peptidoglycan. This is UDP-N-acetylmuramyl-tripeptide synthetase from Limosilactobacillus reuteri (strain DSM 20016) (Lactobacillus reuteri).